Consider the following 141-residue polypeptide: Large ribosomal subunit protein uL16 (141 aa).

It belongs to the universal ribosomal protein uL16 family. In terms of assembly, part of the 50S ribosomal subunit.

Binds 23S rRNA and is also seen to make contacts with the A and possibly P site tRNAs. The polypeptide is Large ribosomal subunit protein uL16 (Petrotoga mobilis (strain DSM 10674 / SJ95)).